The following is a 105-amino-acid chain: Small ribosomal subunit protein bS18 (105 aa).

The segment at Met-1–Asn-34 is disordered. A compositionally biased stretch (polar residues) spans Leu-9–Asn-23.

It belongs to the bacterial ribosomal protein bS18 family. In terms of assembly, part of the 30S ribosomal subunit. Forms a tight heterodimer with protein bS6.

Binds as a heterodimer with protein bS6 to the central domain of the 16S rRNA, where it helps stabilize the platform of the 30S subunit. This is Small ribosomal subunit protein bS18 from Mycoplasma genitalium (strain ATCC 33530 / DSM 19775 / NCTC 10195 / G37) (Mycoplasmoides genitalium).